A 498-amino-acid polypeptide reads, in one-letter code: Serine hydroxymethyltransferase, mitochondrial (498 aa).

Lysine 273 bears the N6-(pyridoxal phosphate)lysine mark.

It belongs to the SHMT family. As to quaternary structure, homotetramer. Requires pyridoxal 5'-phosphate as cofactor.

The protein localises to the mitochondrion. The enzyme catalyses (6R)-5,10-methylene-5,6,7,8-tetrahydrofolate + glycine + H2O = (6S)-5,6,7,8-tetrahydrofolate + L-serine. It participates in one-carbon metabolism; tetrahydrofolate interconversion. Functionally, interconversion of serine and glycine. The protein is Serine hydroxymethyltransferase, mitochondrial (SHM1) of Kluyveromyces lactis (strain ATCC 8585 / CBS 2359 / DSM 70799 / NBRC 1267 / NRRL Y-1140 / WM37) (Yeast).